The sequence spans 187 residues: LSM complex subunit LSM4 (187 aa).

The region spanning 2 to 85 (LPLYLLTNAK…IKFIKLQDNI (84 aa)) is the Sm domain. A disordered region spans residues 93–187 (INSNNNSNSN…NSSSPQKVEF (95 aa)). Residues 112–167 (NRDSNNNRGNYNRRNNNNGNSNRRPYSQNRQYNNSNSSNINNSINSINSNNQNMNN) are compositionally biased toward low complexity. The residue at position 119 (R119) is an Omega-N-methylarginine. A compositionally biased stretch (polar residues) spans 175–187 (HHFNSSSPQKVEF). S181 is subject to Phosphoserine.

It belongs to the snRNP Sm proteins family. In terms of assembly, component of the heptameric LSM1-LSM7 complex that forms a seven-membered ring structure with a donut shape. The LSm subunits are arranged in the order LSM1, LSM2, LSM3, LSM6, LSM5, LSM7 and LSM4. Except for LSM1, where a C-terminal helix crosses the ring structure to form additional interactions with LSM3 and LSM6, each subunit interacts only with its two neighboring subunits. The LSM1-LSM7 complex interacts with PAT1; within the complex PAT1 has direct interactions with LSM2 and LSM3. The LSM1-LSM7 complex interacts with XRN1. Component of the heptameric LSM2-LSM8 complex that forms a seven-membered ring structure with a donut shape; an RNA strand can pass through the hole in the center of the ring structure. The LSm subunits are arranged in the order LSM8, LSM2, LSM3, LSM6, LSM5, LSM7 and LSM4. Component of the spliceosome U4/U6-U5 tri-snRNP complex composed of the U4, U6 and U5 snRNAs and at least PRP3, PRP4, PRP6, PRP8, PRP18, PRP31, PRP38, SNU13, SNU23, SNU66, SNU114, SPP381, SMB1, SMD1, SMD2, SMD3, SMX2, SMX3, LSM2, LSM3, LSM4, LSM5, LSM6, LSM7, LSM8, BRR2 and DIB1. May be found in a complex comprising LSM2-LSM7 without LSM1 or LSM8; the complex associates with pre-P RNA and snoRNA SNR5.

It localises to the nucleus. The protein localises to the cytoplasm. Functionally, component of LSm protein complexes, which are involved in RNA processing and may function in a chaperone-like manner. Component of the cytoplasmic LSM1-LSM7 complex which is involved in mRNA degradation by activating the decapping step. Together with PAT1, the LSM1-LSM7 complex binds to osmotic stress-activated mRNAs to attenuate the osmotic stress response, probably by limiting ribosome access to the mRNA and consequently translation. Component of the nuclear LSM2-LSM8 complex, which is involved in spliceosome assembly. The LSM2-LSM8 complex plays a role in the biogenesis of the spliceosomal U4/U6-U5 tri-snRNP complex by accelerating PRP24-mediated annealing of U4/U6 di-snRNA. The LSM2-LSM8 complex binds U6 snRNA terminating with a non-cyclic 3' phosphate group. LSM2-LSM8 is probably also involved in degradation of nuclear pre-mRNA by targeting them for decapping. LSM2-LSM8 could be involved in processing of pre-tRNAs, pre-rRNAs and U3 snoRNA, although involvement may be indirect. In a complex that probably contains LSM2-LSM7, but not LSM1 or LSM8, associates with the precursor of the RNA component of RNase P (pre-P RNA) and may be involved in maturing pre-P RNA; the complex also associates with snoRNA SNR5. The polypeptide is LSM complex subunit LSM4 (Saccharomyces cerevisiae (strain ATCC 204508 / S288c) (Baker's yeast)).